Consider the following 387-residue polypeptide: Deoxyhypusine synthase (387 aa).

Residues 108 to 112 (SNLIS), 134 to 136 (SAG), E140, and D257 each bind NAD(+). 139 to 140 (EE) provides a ligand contact to spermidine. D262 contacts spermidine. G304 contacts NAD(+). H309 contributes to the spermidine binding site. Residue 329–330 (TG) coordinates NAD(+). Residues 335–337 (GSD) and 344–350 (EAVSWGK) contribute to the spermidine site. K350 serves as the catalytic Nucleophile. An NAD(+)-binding site is contributed by 363 to 364 (DV).

This sequence belongs to the deoxyhypusine synthase family. Homotetramer. NAD(+) serves as cofactor.

The enzyme catalyses [eIF5A protein]-L-lysine + spermidine = [eIF5A protein]-deoxyhypusine + propane-1,3-diamine. It participates in protein modification; eIF5A hypusination. In terms of biological role, catalyzes the NAD-dependent oxidative cleavage of spermidine and the subsequent transfer of the butylamine moiety of spermidine to the epsilon-amino group of a specific lysine residue of the eIF-5A precursor protein to form the intermediate deoxyhypusine residue. This is Deoxyhypusine synthase from Saccharomyces cerevisiae (strain ATCC 204508 / S288c) (Baker's yeast).